Reading from the N-terminus, the 389-residue chain is Histidinol-phosphate aminotransferase (389 aa).

N6-(pyridoxal phosphate)lysine is present on Lys233.

This sequence belongs to the class-II pyridoxal-phosphate-dependent aminotransferase family. Pyridoxal 5'-phosphate serves as cofactor.

The enzyme catalyses L-histidinol phosphate + 2-oxoglutarate = 3-(imidazol-4-yl)-2-oxopropyl phosphate + L-glutamate. Its pathway is amino-acid biosynthesis; L-histidine biosynthesis; L-histidine from 5-phospho-alpha-D-ribose 1-diphosphate: step 7/9. This is Histidinol-phosphate aminotransferase (HIS5) from Candida maltosa (Yeast).